A 90-amino-acid chain; its full sequence is RING finger protein Z (90 aa).

The N-myristoyl glycine; by host moiety is linked to residue glycine 2. An RING-type; atypical zinc finger spans residues 32 to 68; that stretch reads CKSCWQKFDSLVRCHDHYLCRHCLNLLLSVSDRCPLC. The PPXY motif motif lies at 85–88; sequence PPPY.

Belongs to the arenaviridae Z protein family. Interacts with protein NP; this interaction probably directs the encapsidated genome to budding sites. Interacts (via RING-type zinc finger) with polymerase L; this interaction inhibits viral transcription and replication, Z partially blocks the product exit tunnel for the releasing nascent RNA product. Interacts with the glycoprotein complex; this interaction plays a role in virion budding. Interacts (via RING-type zinc finger) with host EIF4E; this interaction results in conformational changes of both interacting proteins and reduces EIF4E affinity for its substrate, the 5'-m7 G cap structure. Interacts (via late-budding domain) with host TSG101; this interaction is essential for budding and release of viral particles. Interacts with host RPLP0; this interaction may serve to load ribosome-like particles inside the virion. Interacts with host PML; this interaction induces PML bodies redistribution in the cytoplasm upon viral infection. Myristoylation is required for the role of RING finger protein Z in assembly and budding.

The protein localises to the virion. The protein resides in the host cytoplasm. Its subcellular location is the host perinuclear region. It is found in the host cell membrane. Functionally, plays a crucial role in virion assembly and budding. Expressed late in the virus life cycle, it acts as an inhibitor of viral transcription and RNA synthesis by interacting with the viral polymerase L. Presumably recruits the NP encapsidated genome to cellular membranes at budding sites via direct interaction with NP. Plays critical roles in the final steps of viral release by interacting with host TSG101, a member of the vacuolar protein-sorting pathway and using other cellular host proteins involved in vesicle formation pathway. The budding of the virus progeny occurs after association of protein Z with the viral glycoprotein complex SSP-GP1-GP2 at the cell periphery, step that requires myristoylation of protein Z. Also selectively represses protein production by associating with host EIF4E. In cell-based minigenome assay, has an inhibitory effect on the ribonucleoprotein machinery (vRNP), which is responsible for the replication and transcription of the viral genome. The chain is RING finger protein Z from Homo sapiens (Human).